The primary structure comprises 242 residues: Small ribosomal subunit protein uS2 (242 aa).

Belongs to the universal ribosomal protein uS2 family.

In Aliivibrio fischeri (strain ATCC 700601 / ES114) (Vibrio fischeri), this protein is Small ribosomal subunit protein uS2.